The following is a 128-amino-acid chain: Regulator of ribonuclease activity B (128 aa).

This sequence belongs to the RraB family. Interacts with the C-terminal region of Rne.

The protein resides in the cytoplasm. Globally modulates RNA abundance by binding to RNase E (Rne) and regulating its endonucleolytic activity. Can modulate Rne action in a substrate-dependent manner by altering the composition of the degradosome. The chain is Regulator of ribonuclease activity B from Idiomarina loihiensis (strain ATCC BAA-735 / DSM 15497 / L2-TR).